We begin with the raw amino-acid sequence, 396 residues long: Aspartate aminotransferase (396 aa).

Gly-34, Trp-130, and Asn-183 together coordinate L-aspartate. Lys-246 is subject to N6-(pyridoxal phosphate)lysine. Position 374 (Arg-374) interacts with L-aspartate.

It belongs to the class-I pyridoxal-phosphate-dependent aminotransferase family. Homodimer. Pyridoxal 5'-phosphate serves as cofactor.

It is found in the cytoplasm. It carries out the reaction L-aspartate + 2-oxoglutarate = oxaloacetate + L-glutamate. This Haemophilus influenzae (strain ATCC 51907 / DSM 11121 / KW20 / Rd) protein is Aspartate aminotransferase (aspC).